Here is a 1938-residue protein sequence, read N- to C-terminus: Myosin-13 (1938 aa).

Positions Asp-33–Pro-82 constitute a Myosin N-terminal SH3-like domain. The region spanning Asp-86–Asp-782 is the Myosin motor domain. The residue at position 130 (Lys-130) is an N6,N6,N6-trimethyllysine. Gly-179–Thr-186 provides a ligand contact to ATP. 2 actin-binding regions span residues Leu-659 to Glu-681 and Arg-761 to Gly-775. Residues Leu-785–Ser-814 enclose the IQ domain. Residues Leu-843 to Glu-1938 are a coiled coil. The disordered stretch occupies residues Ala-1917–Glu-1938. Basic and acidic residues predominate over residues Lys-1927–Glu-1938.

This sequence belongs to the TRAFAC class myosin-kinesin ATPase superfamily. Myosin family. Muscle myosin is a hexameric protein that consists of 2 heavy chain subunits (MHC), 2 alkali light chain subunits (MLC) and 2 regulatory light chain subunits (MLC-2). In terms of tissue distribution, specifically expressed in extraocular and laryngeal muscles.

The protein localises to the cytoplasm. Its subcellular location is the myofibril. Functionally, fast twitching myosin mediating the high-velocity and low-tension contractions of specific striated muscles. The protein is Myosin-13 (MYH13) of Homo sapiens (Human).